A 354-amino-acid polypeptide reads, in one-letter code: DNA replication and repair protein RecF (354 aa).

30-37 contacts ATP; it reads GDNGSGKT.

The protein belongs to the RecF family.

The protein localises to the cytoplasm. Functionally, the RecF protein is involved in DNA metabolism; it is required for DNA replication and normal SOS inducibility. RecF binds preferentially to single-stranded, linear DNA. It also seems to bind ATP. This Idiomarina loihiensis (strain ATCC BAA-735 / DSM 15497 / L2-TR) protein is DNA replication and repair protein RecF.